The following is a 335-amino-acid chain: MGSRERRWLLKHFLNKECLWVKNSASTAVIKVYTSTTARSPLWPGRHAAMPGIEGPINVTVQLMKPKDRKMCATFYVNGVFVDSCTPTAFYCREVQRYGIYLLFFGDLVDPEPPNVIPENIAVHKNEPPVHLTILQMVNSATLLKTPDDLPKPHVEVVPLGPFGPWMANGSLLQYTINPDLLICCPSIGTLPTMSNIITWITKCENEECESCHGNSDHACVLRGVTLADQNYGSDTCPCVAPCSMRHGNIARITTSSNLLGFLFPPESQNDIVAIRAKSNKLTLNVQDIFCGVTREGEEVACLQSPWLLFGLSHLVSRMVMYGCESIKRKCLRSY.

This sequence belongs to the herpesviridae cytoplasmic envelopment protein 2 family. As to quaternary structure, interacts with cytoplasmic envelopment protein 3 and with the capsid.

Its subcellular location is the virion tegument. The protein localises to the host cytoplasm. It localises to the host nucleus. Functionally, plays a critical role in cytoplasmic virus egress. Participates in the final step of tegumentation and envelope acquisition within the host cytoplasm by directly interacting with the capsid. Upon virion binding to target cell, a signaling cascade is triggered to disrupt the interaction with the capsid, thereby preparing capsid uncoating. The protein is Cytoplasmic envelopment protein 2 (33) of Connochaetes taurinus (Blue wildebeest).